A 488-amino-acid chain; its full sequence is Bile acid receptor (488 aa).

Lys-133 is covalently cross-linked (Glycyl lysine isopeptide (Lys-Gly) (interchain with G-Cter in SUMO1)). The nuclear receptor DNA-binding region spans 135 to 210; the sequence is DELCVVCGDR…MGMLAECMYT (76 aa). An NR C4-type zinc finger spans residues 138–158; it reads CVVCGDRASGYHYNALTCEGC. Residues Ser-146 and Ser-165 each carry the phosphoserine; by PKC/PRKCA modification. Lys-168 is modified (N6-acetyllysine; by EP300). An NR C4-type zinc finger spans residues 174–198; it reads CKNGGNCVMDMYMRRKCQECRLRKC. Lys-221 carries the N6-methyllysine; by SETD7 modification. Lys-228 bears the N6-acetyllysine; by EP300 mark. The NR LBD domain maps to 264-488; the sequence is DQQTLLDYIM…PLLCEIWDVQ (225 aa). Lys-291 is covalently cross-linked (Glycyl lysine isopeptide (Lys-Gly) (interchain with G-Cter in SUMO1)). Chenodeoxycholate contacts are provided by Arg-347, Tyr-377, and Tyr-385. Thr-458 carries the phosphothreonine; by PKC/PRKCZ modification. His-463 provides a ligand contact to chenodeoxycholate.

This sequence belongs to the nuclear hormone receptor family. NR1 subfamily. In terms of assembly, heterodimer with RXRA; the heterodimerization enhances the binding affinity for LXXLL motifs from coactivators. Binds DNA predominantly as a heterodimer with RXRA. After activation by agonist binding interacts with coactivators. Interacts with PPARGC1A, SMARCA4 and EP300. Interacts with NCOA1, NCOA2, CARM1, SETD7, PRMT1, GPS2, SMARCA4 and MED1. Interacts with XRCC5 and XRCC6; decreasing NR1H4/FXR transactivation activity towards ABCB11/BSEP. Interacts with PAGR1 and NCOA6; indicative for an association with an MLL2/MLL3 complex (ASCOM). Interacts with NR5A2. Post-translationally, acetylated by EP300. Lys-228 as is the major acetylation site for EP300; the dynamicly regulated acetylation inhibits heterodimerization with RXRA and transactivation activity. Deacetylated by SIRT1. Elevated acetylation levels are found in metabolic disease states (mouse models of obesity and type II diabetes). Methylation may increase transactivation of target genes. In terms of processing, phosphorylation by PKC/PRKCA increases transactivation activity by promoting association with PPARGC1A. Post-translationally, sumoylated upon ligand binding. In terms of tissue distribution, expressed in liver and kidney. Expressed in pancreatic beta cells and macrophages. Expressed in the villus epithelium in adult ileum, with highest expression in the intervillus regions. Expression in colon is reduced by inflammation.

It is found in the nucleus. Ligand-activated transcription factor. Receptor for bile acids (BAs) such as chenodeoxycholic acid (CDCA), lithocholic acid, deoxycholic acid (DCA) and allocholic acid (ACA). Plays a essential role in BA homeostasis through the regulation of genes involved in BA synthesis, conjugation and enterohepatic circulation. Also regulates lipid and glucose homeostasis and is involved in innate immune response. The FXR-RXR heterodimer binds predominantly to farnesoid X receptor response elements (FXREs) containing two inverted repeats of the consensus sequence 5'-AGGTCA-3' in which the monomers are spaced by 1 nucleotide (IR-1) but also to tandem repeat DR1 sites with lower affinity, and can be activated by either FXR or RXR-specific ligands. It is proposed that monomeric nuclear receptors such as NR5A2/LRH-1 bound to coregulatory nuclear responsive element (NRE) halfsites located in close proximity to FXREs modulate transcriptional activity. In the liver activates transcription of the corepressor NR0B2 thereby indirectly inhibiting CYP7A1 and CYP8B1 (involved in BA synthesis) implicating at least in part histone demethylase KDM1A resulting in epigenomic repression, and SLC10A1/NTCP (involved in hepatic uptake of conjugated BAs). Activates transcription of the repressor MAFG (involved in regulation of BA synthesis). Activates transcription of SLC27A5/BACS and BAAT (involved in BA conjugation), ABCB11/BSEP (involved in bile salt export) by directly recruiting histone methyltransferase CARM1, and ABCC2/MRP2 (involved in secretion of conjugated BAs) and ABCB4 (involved in secretion of phosphatidylcholine in the small intestine). In ileal enterocytes activates FABP6/IBABP (involved in cytosolic transport), SLC51A/OSTA and SLC51B/OSTB (involved in secretion of conjugated BAs to the portal blood), and repressor NR0B2/SHP thereby indirectly inhibiting SLC10A2/ASBT (involved in BA uptake). In the intestine activates FGF15 expression and secretion leading to hepatic CYP7A1 repression; the function also involves the coordinated induction of hepatic KLB/beta-klotho expression. Transcriptional activation of FABP6/IBAP and SCD1 but not of ABCB11 is isoform-specific. Regulates transcription of liver UGT2B4 and SULT2A1 involved in BA detoxification; binding to the UGT2B4 promoter seems to imply a monomeric transactivation independent of RXRA. Modulates lipid homeostasis by activating liver NR0B2/SHP-mediated repression of SREBF1 isoform SREBP-1C (involved in de novo lipogenesis), expression of PLTP (involved in HDL formation), SCARB1 (involved in HDL hepatic uptake), APOE, APOC1, APOC4, VLDLR and SDC1 (involved in the hepatic uptake of LDL and IDL remnants), and inhibiting expression of MTTP (involved in VLDL assembly). Increases expression of APOC2 (promoting lipoprotein lipase activity implicated in triglyceride clearance). Transrepresses APOA1 probably involving a monomeric competition with NR2A1 for binding to a DR1 element. Also reduces triglyceride clearance by inhibiting expression of ANGPTL3 and APOC3 (both involved in inhibition of lipoprotein lipase). Involved in glucose homeostasis by modulating hepatic gluconeogenesis through activation of NR0B2/SHP-mediated repression of respective genes. Modulates glycogen synthesis (inducing phosphorylation of glycogen synthase kinase-3). Modulates glucose-stimulated insulin secretion and is involved in insulin resistance. Involved in intestinal innate immunity. Plays a role in protecting the distal small intestine against bacterial overgrowth and preservation of the epithelial barrier. Down-regulates inflammatory cytokine expression in several types of immune cells including macrophages and mononuclear cells. Mediates transrepression of TLR4-induced cytokine expression; the function seems to require its sumoylation and prevents N-CoR nuclear receptor corepressor clearance from target genes such as IL1B and NOS2. Involved in the TLR9-mediated protective mechanism in intestinal inflammation. Plays a anti-inflammatory role in liver inflammation; proposed to inhibit pro-inflammatory (but not antiapoptotic) NF-kappa-B signaling. In terms of biological role, activates transcription of IBAP and SDC1. The chain is Bile acid receptor (Nr1h4) from Mus musculus (Mouse).